The chain runs to 341 residues: Glycerol-3-phosphate dehydrogenase [NAD(P)+] (341 aa).

Serine 11, tryptophan 12, arginine 32, and lysine 106 together coordinate NADPH. Residues lysine 106, glycine 137, and threonine 139 each contribute to the sn-glycerol 3-phosphate site. Alanine 141 serves as a coordination point for NADPH. Positions 192, 245, 255, 256, and 257 each coordinate sn-glycerol 3-phosphate. The Proton acceptor role is filled by lysine 192. Arginine 256 serves as a coordination point for NADPH. Valine 280 and glutamate 282 together coordinate NADPH.

Belongs to the NAD-dependent glycerol-3-phosphate dehydrogenase family.

Its subcellular location is the cytoplasm. It carries out the reaction sn-glycerol 3-phosphate + NAD(+) = dihydroxyacetone phosphate + NADH + H(+). It catalyses the reaction sn-glycerol 3-phosphate + NADP(+) = dihydroxyacetone phosphate + NADPH + H(+). It participates in membrane lipid metabolism; glycerophospholipid metabolism. Catalyzes the reduction of the glycolytic intermediate dihydroxyacetone phosphate (DHAP) to sn-glycerol 3-phosphate (G3P), the key precursor for phospholipid synthesis. The chain is Glycerol-3-phosphate dehydrogenase [NAD(P)+] from Exiguobacterium sp. (strain ATCC BAA-1283 / AT1b).